The primary structure comprises 271 residues: Ribosomal RNA small subunit methyltransferase J (271 aa).

S-adenosyl-L-methionine is bound by residues 116-117, 132-133, 168-169, and aspartate 190; these read RD, ER, and SS.

This sequence belongs to the methyltransferase superfamily. RsmJ family.

The protein resides in the cytoplasm. The catalysed reaction is guanosine(1516) in 16S rRNA + S-adenosyl-L-methionine = N(2)-methylguanosine(1516) in 16S rRNA + S-adenosyl-L-homocysteine + H(+). Specifically methylates the guanosine in position 1516 of 16S rRNA. In Shewanella piezotolerans (strain WP3 / JCM 13877), this protein is Ribosomal RNA small subunit methyltransferase J.